The chain runs to 314 residues: tRNA dimethylallyltransferase (314 aa).

12-19 (GPTAGGKS) lines the ATP pocket. A substrate-binding site is contributed by 14-19 (TAGGKS). The segment at 37 to 40 (DSMQ) is interaction with substrate tRNA.

It belongs to the IPP transferase family. In terms of assembly, monomer. It depends on Mg(2+) as a cofactor.

The enzyme catalyses adenosine(37) in tRNA + dimethylallyl diphosphate = N(6)-dimethylallyladenosine(37) in tRNA + diphosphate. Its function is as follows. Catalyzes the transfer of a dimethylallyl group onto the adenine at position 37 in tRNAs that read codons beginning with uridine, leading to the formation of N6-(dimethylallyl)adenosine (i(6)A). This is tRNA dimethylallyltransferase from Rhodospirillum centenum (strain ATCC 51521 / SW).